Here is a 20-residue protein sequence, read N- to C-terminus: Protein PR-L1 (20 aa).

This sequence belongs to the BetVI family.

This chain is Protein PR-L1, found in Lupinus luteus (European yellow lupine).